The primary structure comprises 295 residues: Putative nudix hydrolase 7 (295 aa).

The Nudix hydrolase domain occupies 9–182; it reads SWRSAASIIL…KYALPPPQVY (174 aa). A Nudix box motif is present at residues 52–73; the sequence is TDAKLGDEFRIAAVRELFEESG. Residues glutamate 67 and glutamate 71 each contribute to the Mg(2+) site.

The protein belongs to the Nudix hydrolase family. The cofactor is Mg(2+). Requires Mn(2+) as cofactor.

In terms of biological role, probably mediates the hydrolysis of some nucleoside diphosphate derivatives. In Caenorhabditis elegans, this protein is Putative nudix hydrolase 7 (ndx-7).